The sequence spans 409 residues: 4-hydroxy-3-methylbut-2-en-1-yl diphosphate synthase (ferredoxin) (409 aa).

Polar residues predominate over residues 1–12; sequence MQTLDRPNAPTQ. A disordered region spans residues 1–22; it reads MQTLDRPNAPTQQPYPEPVYPR. [4Fe-4S] cluster is bound by residues Cys314, Cys317, Cys348, and Glu355.

This sequence belongs to the IspG family. It depends on [4Fe-4S] cluster as a cofactor.

It carries out the reaction (2E)-4-hydroxy-3-methylbut-2-enyl diphosphate + 2 oxidized [2Fe-2S]-[ferredoxin] + H2O = 2-C-methyl-D-erythritol 2,4-cyclic diphosphate + 2 reduced [2Fe-2S]-[ferredoxin] + H(+). It participates in isoprenoid biosynthesis; isopentenyl diphosphate biosynthesis via DXP pathway; isopentenyl diphosphate from 1-deoxy-D-xylulose 5-phosphate: step 5/6. Functionally, converts 2C-methyl-D-erythritol 2,4-cyclodiphosphate (ME-2,4cPP) into 1-hydroxy-2-methyl-2-(E)-butenyl 4-diphosphate. This chain is 4-hydroxy-3-methylbut-2-en-1-yl diphosphate synthase (ferredoxin), found in Synechococcus sp. (strain JA-2-3B'a(2-13)) (Cyanobacteria bacterium Yellowstone B-Prime).